The sequence spans 510 residues: ATP synthase subunit alpha (510 aa).

170–177 contacts ATP; sequence GDRQTGKT.

This sequence belongs to the ATPase alpha/beta chains family. F-type ATPases have 2 components, CF(1) - the catalytic core - and CF(0) - the membrane proton channel. CF(1) has five subunits: alpha(3), beta(3), gamma(1), delta(1), epsilon(1). CF(0) has three main subunits: a(1), b(2) and c(9-12). The alpha and beta chains form an alternating ring which encloses part of the gamma chain. CF(1) is attached to CF(0) by a central stalk formed by the gamma and epsilon chains, while a peripheral stalk is formed by the delta and b chains.

The protein localises to the cell inner membrane. It catalyses the reaction ATP + H2O + 4 H(+)(in) = ADP + phosphate + 5 H(+)(out). Functionally, produces ATP from ADP in the presence of a proton gradient across the membrane. The alpha chain is a regulatory subunit. This chain is ATP synthase subunit alpha, found in Acidiphilium cryptum (strain JF-5).